The chain runs to 282 residues: Phosphatidylserine decarboxylase proenzyme (282 aa).

Active-site charge relay system; for autoendoproteolytic cleavage activity residues include Asp85, His142, and Ser244. The active-site Schiff-base intermediate with substrate; via pyruvic acid; for decarboxylase activity is Ser244. Residue Ser244 is modified to Pyruvic acid (Ser); by autocatalysis.

This sequence belongs to the phosphatidylserine decarboxylase family. PSD-B subfamily. Prokaryotic type I sub-subfamily. As to quaternary structure, heterodimer of a large membrane-associated beta subunit and a small pyruvoyl-containing alpha subunit. Requires pyruvate as cofactor. Post-translationally, is synthesized initially as an inactive proenzyme. Formation of the active enzyme involves a self-maturation process in which the active site pyruvoyl group is generated from an internal serine residue via an autocatalytic post-translational modification. Two non-identical subunits are generated from the proenzyme in this reaction, and the pyruvate is formed at the N-terminus of the alpha chain, which is derived from the carboxyl end of the proenzyme. The autoendoproteolytic cleavage occurs by a canonical serine protease mechanism, in which the side chain hydroxyl group of the serine supplies its oxygen atom to form the C-terminus of the beta chain, while the remainder of the serine residue undergoes an oxidative deamination to produce ammonia and the pyruvoyl prosthetic group on the alpha chain. During this reaction, the Ser that is part of the protease active site of the proenzyme becomes the pyruvoyl prosthetic group, which constitutes an essential element of the active site of the mature decarboxylase.

It localises to the cell membrane. The enzyme catalyses a 1,2-diacyl-sn-glycero-3-phospho-L-serine + H(+) = a 1,2-diacyl-sn-glycero-3-phosphoethanolamine + CO2. Its pathway is phospholipid metabolism; phosphatidylethanolamine biosynthesis; phosphatidylethanolamine from CDP-diacylglycerol: step 2/2. Functionally, catalyzes the formation of phosphatidylethanolamine (PtdEtn) from phosphatidylserine (PtdSer). The sequence is that of Phosphatidylserine decarboxylase proenzyme from Coxiella burnetii (strain Dugway 5J108-111).